A 271-amino-acid chain; its full sequence is Ribosomal RNA small subunit methyltransferase I (271 aa).

The protein belongs to the methyltransferase superfamily. RsmI family.

It localises to the cytoplasm. The enzyme catalyses cytidine(1402) in 16S rRNA + S-adenosyl-L-methionine = 2'-O-methylcytidine(1402) in 16S rRNA + S-adenosyl-L-homocysteine + H(+). Its function is as follows. Catalyzes the 2'-O-methylation of the ribose of cytidine 1402 (C1402) in 16S rRNA. The polypeptide is Ribosomal RNA small subunit methyltransferase I (Campylobacter fetus subsp. fetus (strain 82-40)).